A 413-amino-acid chain; its full sequence is Porin PorA (413 aa).

The first 22 residues, 1–22 (MKKVVSSLLIILGAAMLIFAIA), serve as a signal peptide directing secretion. The disordered stretch occupies residues 265 to 288 (TKSAADSKDDKKKDGDKKDEKSPE).

Belongs to the PorA family.

The protein localises to the secreted. The protein resides in the cell wall. Its function is as follows. Forms water-filled channels that favor the permeation of cations. In Corynebacterium resistens (strain DSM 45100 / JCM 12819 / GTC 2026 / SICGH 158), this protein is Porin PorA.